Consider the following 209-residue polypeptide: tRNA (guanine-N(7)-)-methyltransferase (209 aa).

S-adenosyl-L-methionine-binding residues include aspartate 35, glutamate 60, asparagine 87, and aspartate 113. Aspartate 113 is a catalytic residue. Substrate is bound by residues lysine 117 and aspartate 149.

The protein belongs to the class I-like SAM-binding methyltransferase superfamily. TrmB family.

It catalyses the reaction guanosine(46) in tRNA + S-adenosyl-L-methionine = N(7)-methylguanosine(46) in tRNA + S-adenosyl-L-homocysteine. Its pathway is tRNA modification; N(7)-methylguanine-tRNA biosynthesis. In terms of biological role, catalyzes the formation of N(7)-methylguanine at position 46 (m7G46) in tRNA. The polypeptide is tRNA (guanine-N(7)-)-methyltransferase (Prochlorococcus marinus subsp. pastoris (strain CCMP1986 / NIES-2087 / MED4)).